The chain runs to 168 residues: Peptide methionine sulfoxide reductase 2 (168 aa).

The region spanning Asp-40–Asp-168 is the MsrB domain. 4 residues coordinate Zn(2+): Cys-79, Cys-82, Cys-128, and Cys-131. The cysteines at positions 97 and 157 are disulfide-linked. The active-site Nucleophile is Cys-157.

The protein belongs to the MsrB Met sulfoxide reductase family. Zn(2+) is required as a cofactor.

It carries out the reaction L-methionyl-[protein] + [thioredoxin]-disulfide + H2O = L-methionyl-(R)-S-oxide-[protein] + [thioredoxin]-dithiol. Its function is as follows. Methionine-R-sulfoxide reductase which catalyzes the reduction of methionine sulfoxide (MetSO) to methionine in proteins. Plays a protective role against oxidative stress by restoring activity to proteins that have been inactivated by methionine oxidation. Protects iron-sulfur clusters from oxidative inactivation along with MXR1. Involved in the regulation of lifespan. This is Peptide methionine sulfoxide reductase 2 (MXR2) from Saccharomyces cerevisiae (strain ATCC 204508 / S288c) (Baker's yeast).